A 429-amino-acid chain; its full sequence is Fumarylacetoacetase (429 aa).

Position 139 (Asp139) interacts with Ca(2+). The active-site Proton acceptor is His146. Residue Arg155 participates in substrate binding. 3 residues coordinate Ca(2+): Glu212, Glu214, and Asp246. Asp246 provides a ligand contact to Mg(2+). Gln253 provides a ligand contact to substrate. Mg(2+) is bound by residues Lys266 and Thr270. A substrate-binding site is contributed by Thr363.

Belongs to the FAH family. Ca(2+) serves as cofactor. Mg(2+) is required as a cofactor.

It carries out the reaction 4-fumarylacetoacetate + H2O = acetoacetate + fumarate + H(+). The protein operates within amino-acid degradation; L-phenylalanine degradation; acetoacetate and fumarate from L-phenylalanine: step 6/6. Converts fumarylacetoacetate to acetoacetate and fumarate. Involved in tyrosine catabolic pathway. Catalyzes the final step in the tyrosine degradation pathway. The sequence is that of Fumarylacetoacetase from Oryza sativa subsp. japonica (Rice).